Consider the following 259-residue polypeptide: tRNA (guanine-N(1)-)-methyltransferase (259 aa).

S-adenosyl-L-methionine is bound by residues Gly113 and 133-138 (IGDYVL).

This sequence belongs to the RNA methyltransferase TrmD family. In terms of assembly, homodimer.

It localises to the cytoplasm. The catalysed reaction is guanosine(37) in tRNA + S-adenosyl-L-methionine = N(1)-methylguanosine(37) in tRNA + S-adenosyl-L-homocysteine + H(+). Functionally, specifically methylates guanosine-37 in various tRNAs. This Xanthomonas oryzae pv. oryzae (strain MAFF 311018) protein is tRNA (guanine-N(1)-)-methyltransferase.